We begin with the raw amino-acid sequence, 71 residues long: Dermonecrotic toxin LgSicTox-alphaI-Loxn-A (71 aa).

The active site involves His12. 3 residues coordinate Mg(2+): Glu32, Asp34, and Asp48.

Requires Mg(2+) as cofactor. Contains 2 disulfide bonds. In terms of tissue distribution, expressed by the venom gland.

It is found in the secreted. It carries out the reaction an N-(acyl)-sphingosylphosphocholine = an N-(acyl)-sphingosyl-1,3-cyclic phosphate + choline. The catalysed reaction is an N-(acyl)-sphingosylphosphoethanolamine = an N-(acyl)-sphingosyl-1,3-cyclic phosphate + ethanolamine. The enzyme catalyses a 1-acyl-sn-glycero-3-phosphocholine = a 1-acyl-sn-glycero-2,3-cyclic phosphate + choline. It catalyses the reaction a 1-acyl-sn-glycero-3-phosphoethanolamine = a 1-acyl-sn-glycero-2,3-cyclic phosphate + ethanolamine. Its function is as follows. Catalyzes the hydrolysis of sphingomyelin. May also act on other phosphatidyl esters. In terms of biological role, dermonecrotic toxins cleave the phosphodiester linkage between the phosphate and headgroup of certain phospholipids (sphingolipid and lysolipid substrates), forming an alcohol (often choline) and a cyclic phosphate. This toxin acts on sphingomyelin (SM). It may also act on ceramide phosphoethanolamine (CPE), lysophosphatidylcholine (LPC) and lysophosphatidylethanolamine (LPE), but not on lysophosphatidylserine (LPS), and lysophosphatidylglycerol (LPG). It acts by transphosphatidylation, releasing exclusively cyclic phosphate products as second products. In vivo, induces dermonecrosis, but is not lethal. Induces hemolysis, vascular permeability, edema, inflammatory response, and platelet aggregation. The sequence is that of Dermonecrotic toxin LgSicTox-alphaI-Loxn-A from Loxosceles gaucho (Spider).